Reading from the N-terminus, the 354-residue chain is Photosystem II D2 protein (354 aa).

An N-acetylthreonine modification is found at threonine 2. Threonine 2 carries the post-translational modification Phosphothreonine. Residues 42–62 form a helical membrane-spanning segment; it reads CAYFALGGFFTGNTFVTSWYT. Residue histidine 119 participates in chlorophyll a binding. Residues 126–142 traverse the membrane as a helical segment; that stretch reads GFMLRQFEIARAVKIRP. Pheophytin a-binding residues include glutamine 131 and asparagine 144. A helical membrane pass occupies residues 154 to 167; that stretch reads VFVSVFLIYPLGQQ. Histidine 199 is a binding site for chlorophyll a. Residues 209-229 form a helical membrane-spanning segment; sequence AALLCAIHGATVENTLFEDGD. Residues histidine 216 and phenylalanine 263 each coordinate a plastoquinone. Position 216 (histidine 216) interacts with Fe cation. Histidine 270 is a Fe cation binding site. Residues 280 to 296 form a helical membrane-spanning segment; that stretch reads GLWMSAIGVVGLALNLR.

This sequence belongs to the reaction center PufL/M/PsbA/D family. In terms of assembly, PSII is composed of 1 copy each of membrane proteins PsbA, PsbB, PsbC, PsbD, PsbE, PsbF, PsbH, PsbI, PsbJ, PsbK, PsbL, PsbM, PsbT, PsbX, PsbY, PsbZ, Psb30/Ycf12, at least 3 peripheral proteins of the oxygen-evolving complex and a large number of cofactors. It forms dimeric complexes. The D1/D2 heterodimer binds P680, chlorophylls that are the primary electron donor of PSII, and subsequent electron acceptors. It shares a non-heme iron and each subunit binds pheophytin, quinone, additional chlorophylls, carotenoids and lipids. There is also a Cl(-1) ion associated with D1 and D2, which is required for oxygen evolution. The PSII complex binds additional chlorophylls, carotenoids and specific lipids. serves as cofactor.

It localises to the plastid. It is found in the chloroplast thylakoid membrane. It catalyses the reaction 2 a plastoquinone + 4 hnu + 2 H2O = 2 a plastoquinol + O2. Functionally, photosystem II (PSII) is a light-driven water:plastoquinone oxidoreductase that uses light energy to abstract electrons from H(2)O, generating O(2) and a proton gradient subsequently used for ATP formation. It consists of a core antenna complex that captures photons, and an electron transfer chain that converts photonic excitation into a charge separation. The D1/D2 (PsbA/PsbD) reaction center heterodimer binds P680, the primary electron donor of PSII as well as several subsequent electron acceptors. D2 is needed for assembly of a stable PSII complex. The sequence is that of Photosystem II D2 protein from Mesostigma viride (Green alga).